The following is a 269-amino-acid chain: MKIALGIEYNGTHYFGWQRQANVTSVQEKLESAVSFVANEFCQIYCAGRTDSGVHATGQVVHFDTKAIRSEKAWTFGLNANLPADIAVRWAKVVSEDFHARFSATARRYRYLIYNHPLRSALFPTGVTHHHVALDHRLMHQAGQYLLGEHDFSSFRAAQCQSNTPWRNIHHLHVFRQANYIIVDIQANAFVHHMVRNIVGSLLEIGSGKQPVEWMDWLLTQKDRTLAAPTAKPDGLYLVEVKYPNHFNLPKNPLGPLFLGEPKIDFNHD.

Asp-51 acts as the Nucleophile in catalysis. A substrate-binding site is contributed by Tyr-109.

It belongs to the tRNA pseudouridine synthase TruA family. As to quaternary structure, homodimer.

It catalyses the reaction uridine(38/39/40) in tRNA = pseudouridine(38/39/40) in tRNA. In terms of biological role, formation of pseudouridine at positions 38, 39 and 40 in the anticodon stem and loop of transfer RNAs. This Histophilus somni (strain 129Pt) (Haemophilus somnus) protein is tRNA pseudouridine synthase A.